A 190-amino-acid polypeptide reads, in one-letter code: Adenylate kinase (190 aa).

11-16 (GAGKGT) serves as a coordination point for ATP. The NMP stretch occupies residues 31–60 (STGDIFRFNLKNDTELGKQARVFMDNGELV). Residues threonine 32, arginine 37, 58–60 (ELV), 86–89 (GYPR), and glutamine 93 each bind AMP. The segment at 127 to 137 (ERGKTSGRADD) is LID. Position 128 (arginine 128) interacts with ATP. AMP-binding residues include arginine 134 and arginine 146. Glycine 174 is a binding site for ATP.

The protein belongs to the adenylate kinase family. In terms of assembly, monomer.

It localises to the cytoplasm. The enzyme catalyses AMP + ATP = 2 ADP. Its pathway is purine metabolism; AMP biosynthesis via salvage pathway; AMP from ADP: step 1/1. Catalyzes the reversible transfer of the terminal phosphate group between ATP and AMP. Plays an important role in cellular energy homeostasis and in adenine nucleotide metabolism. The sequence is that of Adenylate kinase from Flavobacterium johnsoniae (strain ATCC 17061 / DSM 2064 / JCM 8514 / BCRC 14874 / CCUG 350202 / NBRC 14942 / NCIMB 11054 / UW101) (Cytophaga johnsonae).